The chain runs to 22 residues: Mu-conotoxin CnIIIC (22 aa).

Glutamine 1 is subject to Pyrrolidone carboxylic acid; partial. 3 disulfides stabilise this stretch: cysteine 3/cysteine 15, cysteine 4/cysteine 21, and cysteine 10/cysteine 22. Cysteine 22 is subject to Cysteine amide.

It belongs to the conotoxin M superfamily. In terms of tissue distribution, expressed by the venom duct.

It is found in the secreted. In terms of biological role, mu-conotoxins block voltage-gated sodium channels (Nav). This synthetic toxin blocks both voltage-gated sodium channels and nicotinic acetylcholine receptor (nAChR). Inhibits the skeletal muscle rNav1.4/SCN4A (IC(50)=1.3 nM) and the brain rNav1.2/SCN2A in a long-lasting manner. A low inhibition is also observed on neuronal mNav1.6/SCN8A and mNav1.7/SCN9A. Modestly blocks nAChR alpha-3/beta-2 subtype (IC(50)=450 nM) (partially reversible) and, to a lesser extent, alpha-7 and alpha-4/beta-2 subtypes (reversible). In vitro, decreases twitch tension in mouse hemidiaphragms (IC(50)=150 nM), and displays a high blocking effect in mouse extensor digitorum longus muscles (IC(50)=46 nM). In Conus consors (Singed cone), this protein is Mu-conotoxin CnIIIC.